The following is an 83-amino-acid chain: Small ribosomal subunit protein bS16 (83 aa).

It belongs to the bacterial ribosomal protein bS16 family.

This is Small ribosomal subunit protein bS16 from Azotobacter vinelandii (strain DJ / ATCC BAA-1303).